Reading from the N-terminus, the 1230-residue chain is Basic-leucine zipper transcription factor A (1230 aa).

4 disordered regions span residues Leu-65–Asn-108, Leu-180–Gln-233, Gln-270–Gln-310, and His-422–Asp-578. 5 stretches are compositionally biased toward low complexity: residues Asn-69–Asn-108, Asn-192–Gln-233, Gln-270–Pro-287, Pro-295–Gln-310, and His-422–His-447. Polar residues-rich tracts occupy residues Lys-448 to Pro-458 and Thr-466 to Gly-475. Positions Ser-476 to Ser-503 are enriched in low complexity. Residues Pro-523–His-537 are compositionally biased toward basic residues. Residues Phe-541–Glu-554 show a composition bias toward acidic residues. In terms of domain architecture, bZIP spans Asp-555–Asp-618. Positions Lys-556 to Lys-586 are basic motif. Polar residues predominate over residues Arg-562–Asn-571. The interval Leu-590 to Leu-604 is leucine-zipper. Residues Leu-728–Ile-753 adopt a coiled-coil conformation. Disordered stretches follow at residues Thr-772–Lys-869 and Asn-1025–Ile-1230. Low complexity-rich tracts occupy residues Asn-774–Pro-803 and Asn-810–Asn-831. The span at Ser-832–Gly-845 shows a compositional bias: basic residues. The segment covering Asn-1025 to Asn-1042 has biased composition (polar residues). Composition is skewed to low complexity over residues Asn-1052–Asn-1146 and Gln-1153–Ser-1193.

Belongs to the bZIP family. As to quaternary structure, binds DNA as a dimer. Heterodimerizes with dimB; in vitro. Also able to form homodimer; in vitro.

The protein localises to the nucleus. Its function is as follows. Transcriptional regulator involved in DIF-1 signaling. DIF-1 (Differentiation Inducing Factor-1) is a signal molecule involved in the differentiation of pstO (prestalk-O) cells. Functions both as an activator of prestalk gene expression and a repressor of prespore gene expression. The chain is Basic-leucine zipper transcription factor A (dimA) from Dictyostelium discoideum (Social amoeba).